The primary structure comprises 2266 residues: Protein ELYS (2266 aa).

Positions 1–494 are seven-bladed beta propeller repeats; that stretch reads MRDLRAQVTS…SGVVHLTCTG (494 aa). The necessary for cytoplasmic localization stretch occupies residues 1–981; the sequence is MRDLRAQVTS…QTLKINVMND (981 aa). 9 positions are modified to phosphoserine: Ser-509, Ser-528, Ser-1080, Ser-1138, Ser-1142, Ser-1150, Ser-1153, Ser-1155, and Ser-1160. The interval 591-1092 is important for nuclear localization; it reads VVLTKEEFDR…IEEPSPIVYS (502 aa). Positions 1019 to 2266 are disordered; it reads YHLSTSSVFR…PKQILRRKML (1248 aa). A necessary for nuclear localization region spans residues 1149-2266; it reads RSLPSSSQLK…PKQILRRKML (1118 aa). Residue Thr-1175 is modified to Phosphothreonine. Ser-1214, Ser-1218, Ser-1222, Ser-1232, and Ser-1250 each carry phosphoserine. Thr-1257 bears the Phosphothreonine mark. Phosphoserine is present on residues Ser-1283 and Ser-1297. Composition is skewed to polar residues over residues 1305-1320 and 1335-1353; these read KGNSSVSITSDETTLE and FTASKPKSSSTALTTNVTE. Thr-1369 carries the post-translational modification Phosphothreonine. Residues Ser-1371 and Ser-1513 each carry the phosphoserine modification. The interval 1446–1698 is mediates transcriptional activity; it reads RANDNKSMAD…MEQSIHETIP (253 aa). Phosphothreonine is present on Thr-1517. Residues Ser-1533, Ser-1541, Ser-1729, and Ser-1806 each carry the phosphoserine modification. Composition is skewed to polar residues over residues 1796–1808 and 1822–1838; these read LSQNQQIPQNSVT and ILENTSSVEQELQITTG. Phosphothreonine is present on Thr-1808. The important for nuclear localization and chromatin binding stretch occupies residues 1842-2266; that stretch reads KRLKSSQLLE…PKQILRRKML (425 aa). 3 positions are modified to phosphoserine: Ser-1878, Ser-1884, and Ser-1898. Over residues 1908-1919 the composition is skewed to polar residues; that stretch reads STNLDASENTGN. 2 stretches are compositionally biased toward basic and acidic residues: residues 1920 to 1930 and 1940 to 1952; these read KQDDKSSDKQL and GREVSPSDVREDS. Ser-1944 and Ser-1946 each carry phosphoserine. Positions 1971 to 1983 form a DNA-binding region, a.T hook; the sequence is PRKRGRPRKINPS. The segment covering 1986–2004 has biased composition (basic and acidic residues); sequence VGSKAVKEERSPKKKEAPS. 4 positions are modified to phosphoserine: Ser-1996, Ser-2043, Ser-2044, and Ser-2060. Residues 2064-2084 are compositionally biased toward basic and acidic residues; that stretch reads VSEERTDEMTHKETNEQEERL. Residues Ser-2089, Ser-2120, Ser-2123, and Ser-2154 each carry the phosphoserine modification. Positions 2169–2179 are enriched in basic and acidic residues; sequence NKLEDELKDDA. Positions 2188–2197 are enriched in basic residues; the sequence is PKAKRIRTSK. Phosphoserine occurs at positions 2212, 2222, and 2226.

The protein belongs to the ELYS family. In terms of assembly, associates with the Nup107-160 subcomplex of the NPC.

It localises to the cytoplasm. The protein localises to the nucleus. Its subcellular location is the nucleus envelope. It is found in the nucleus matrix. The protein resides in the chromosome. It localises to the centromere. The protein localises to the kinetochore. Its subcellular location is the nucleoplasm. It is found in the nuclear pore complex. Its function is as follows. Required for the assembly of a functional nuclear pore complex (NPC) on the surface of chromosomes as nuclei form at the end of mitosis. May initiate NPC assembly by binding to chromatin and recruiting the Nup107-160 subcomplex of the NPC. Also required for the localization of the Nup107-160 subcomplex of the NPC to the kinetochore during mitosis and for the completion of cytokinesis. The chain is Protein ELYS (AHCTF1) from Homo sapiens (Human).